Reading from the N-terminus, the 101-residue chain is Small ribosomal subunit protein uS14 (101 aa).

This sequence belongs to the universal ribosomal protein uS14 family. In terms of assembly, part of the 30S ribosomal subunit. Contacts proteins S3 and S10.

Binds 16S rRNA, required for the assembly of 30S particles and may also be responsible for determining the conformation of the 16S rRNA at the A site. This chain is Small ribosomal subunit protein uS14, found in Alteromonas mediterranea (strain DSM 17117 / CIP 110805 / LMG 28347 / Deep ecotype).